A 191-amino-acid polypeptide reads, in one-letter code: Large ribosomal subunit protein bL9 (191 aa).

The segment at 151 to 191 (AERQAKGESLTSADAIYGVDEDALKPEDFFNPEAEIESEEE) is disordered.

The protein belongs to the bacterial ribosomal protein bL9 family.

Functionally, binds to the 23S rRNA. This is Large ribosomal subunit protein bL9 from Sinorhizobium medicae (strain WSM419) (Ensifer medicae).